The primary structure comprises 182 residues: Ribosomal RNA small subunit methyltransferase G (182 aa).

S-adenosyl-L-methionine is bound by residues glycine 58, phenylalanine 63, 109–110 (IE), and arginine 123.

It belongs to the methyltransferase superfamily. RNA methyltransferase RsmG family.

Its subcellular location is the cytoplasm. It carries out the reaction guanosine(527) in 16S rRNA + S-adenosyl-L-methionine = N(7)-methylguanosine(527) in 16S rRNA + S-adenosyl-L-homocysteine. Functionally, specifically methylates the N7 position of guanine in position 527 of 16S rRNA. In Campylobacter fetus subsp. fetus (strain 82-40), this protein is Ribosomal RNA small subunit methyltransferase G.